Consider the following 119-residue polypeptide: Putative F420H(2)-dependent quinone reductase Rv3178 (119 aa).

Coenzyme F420-(gamma-Glu)n is bound by residues 21–23 (RKS), 27–32 (FVAPLL), 43–46 (VASA), and 54–58 (QWYRN).

The protein belongs to the F420H(2)-dependent quinone reductase family.

Its subcellular location is the cell membrane. The enzyme catalyses oxidized coenzyme F420-(gamma-L-Glu)(n) + a quinol + H(+) = reduced coenzyme F420-(gamma-L-Glu)(n) + a quinone. Functionally, involved in a F420-dependent anti-oxidant mechanism that protects M.tuberculosis against oxidative stress and bactericidal agents. Catalyzes the F420H(2)-dependent two-electron reduction of quinones to dihydroquinones, thereby preventing the formation of cytotoxic semiquinones obtained by the one-electron reduction pathway. Since menaquinone is the sole quinone electron carrier in the respiratory chain in M.tuberculosis, the physiological electron acceptor for Fqr-mediated F420H(2) oxidation is therefore likely to be the endogenous menaquinone found in the membrane fraction of M.tuberculosis. The sequence is that of Putative F420H(2)-dependent quinone reductase Rv3178 from Mycobacterium tuberculosis (strain ATCC 25618 / H37Rv).